A 438-amino-acid polypeptide reads, in one-letter code: Proline--tRNA ligase (438 aa).

This sequence belongs to the class-II aminoacyl-tRNA synthetase family. ProS type 2 subfamily. In terms of assembly, homodimer.

Its subcellular location is the cytoplasm. It carries out the reaction tRNA(Pro) + L-proline + ATP = L-prolyl-tRNA(Pro) + AMP + diphosphate. In terms of biological role, catalyzes the attachment of proline to tRNA(Pro) in a two-step reaction: proline is first activated by ATP to form Pro-AMP and then transferred to the acceptor end of tRNA(Pro). This Rickettsia canadensis (strain McKiel) protein is Proline--tRNA ligase.